The following is a 278-amino-acid chain: Heat stress transcription factor C-2b (278 aa).

Residues 105 to 114 are compositionally biased toward gly residues; sequence AAGGGGGGGG. The disordered stretch occupies residues 105–132; the sequence is AAGGGGGGGGGKRRDASADGGGGGGDED. The interval 143-179 is hydrophobic repeat HR-A/B; sequence LKQEQRTIDDRVAAMWRRVQETERRPKQMLAFLLKVV. Residues 219–222 carry the Nuclear localization signal motif; that stretch reads KRAR.

This sequence belongs to the HSF family. Class C subfamily. Homotrimer. Post-translationally, exhibits temperature-dependent phosphorylation.

It localises to the nucleus. In terms of biological role, transcriptional regulator that specifically binds DNA of heat shock promoter elements (HSE). The protein is Heat stress transcription factor C-2b (HSFC2B) of Oryza sativa subsp. japonica (Rice).